A 106-amino-acid chain; its full sequence is UPF0145 protein Tpet_0165 (106 aa).

The protein belongs to the UPF0145 family.

This chain is UPF0145 protein Tpet_0165, found in Thermotoga petrophila (strain ATCC BAA-488 / DSM 13995 / JCM 10881 / RKU-1).